Reading from the N-terminus, the 103-residue chain is Large ribosomal subunit protein bL21 (103 aa).

Belongs to the bacterial ribosomal protein bL21 family. As to quaternary structure, part of the 50S ribosomal subunit. Contacts protein L20.

This protein binds to 23S rRNA in the presence of protein L20. In Parvibaculum lavamentivorans (strain DS-1 / DSM 13023 / NCIMB 13966), this protein is Large ribosomal subunit protein bL21.